A 241-amino-acid polypeptide reads, in one-letter code: Chloride intracellular channel protein 1 (241 aa).

Position 2 is an N-acetylalanine (alanine 2). The required for insertion into the membrane stretch occupies residues 2-90; sequence AEEQPQVELF…EEFLEAVLCP (89 aa). Lysine 13 carries the post-translational modification N6-acetyllysine. Cysteine 24 contacts glutathione. Cysteine 24 carries the S-glutathionyl cysteine; alternate modification. Residues 24–27 carry the G-site motif; that stretch reads CPFS. A disulfide bridge links cysteine 24 with cysteine 59. A helical membrane pass occupies residues 26–46; the sequence is FSQRLFMVLWLKGVTFNVTTV. Leucine 64 and threonine 77 together coordinate glutathione. The region spanning 93-233 is the GST C-terminal domain; it reads YPKLAALNPE…PDDEEIELAY (141 aa). At lysine 119 the chain carries N6-acetyllysine. Serine 121 is subject to Phosphoserine. An N6-acetyllysine modification is found at lysine 131. Phosphoserine is present on residues serine 156 and serine 211. Tyrosine 233 is modified (phosphotyrosine).

This sequence belongs to the chloride channel CLIC family. As to quaternary structure, monomer. Homodimer (in vitro). Interacts with TRAPPC2. Dimerization requires a conformation change that leads to the exposure of a large hydrophobic surface. In vivo, this may lead to membrane insertion. Interacts with AKAP9. Post-translationally, hydrogen peroxide treatment causes a conformation change, leading to dimerization and formation of an intramolecular disulfide bond between Cys-24 and Cys-59. In terms of tissue distribution, expression is prominent in heart, placenta, liver, kidney and pancreas.

The protein localises to the nucleus. Its subcellular location is the nucleus membrane. It localises to the cytoplasm. The protein resides in the cell membrane. It is found in the endoplasmic reticulum. It catalyses the reaction L-dehydroascorbate + 2 glutathione = glutathione disulfide + L-ascorbate. The enzyme catalyses chloride(in) = chloride(out). It carries out the reaction iodide(out) = iodide(in). The catalysed reaction is thiocyanate(in) = thiocyanate(out). It catalyses the reaction nitrate(in) = nitrate(out). The enzyme catalyses bromide(in) = bromide(out). It carries out the reaction fluoride(in) = fluoride(out). Its activity is regulated as follows. The oxidoreductase activity is inhibited by rapamycin, amphotericin B and IAA-94. The channel conductance is regulated by pH and redox membrane potential. Inhibited by IAA-94. In the soluble state, catalyzes glutaredoxin-like thiol disulfide exchange reactions with reduced glutathione as electron donor. Reduces selenite and dehydroascorbate and may act as an antioxidant during oxidative stress response. Can insert into membranes and form voltage-dependent multi-ion conductive channels. Membrane insertion seems to be redox-regulated and may occur only under oxidizing conditions. Involved in regulation of the cell cycle. The chain is Chloride intracellular channel protein 1 from Homo sapiens (Human).